Here is a 301-residue protein sequence, read N- to C-terminus: Oxygen-dependent coproporphyrinogen-III oxidase (301 aa).

Ser90 contributes to the substrate binding site. A divalent metal cation-binding residues include His94 and His104. His104 functions as the Proton donor in the catalytic mechanism. 106–108 provides a ligand contact to substrate; that stretch reads NVR. Residues His143 and His173 each coordinate a divalent metal cation. The segment at 238–273 is important for dimerization; sequence YVEFNLVWDRGTLFGLQSGGRTESILMSLPPVVKWR. 256 to 258 contributes to the substrate binding site; it reads GGR.

The protein belongs to the aerobic coproporphyrinogen-III oxidase family. As to quaternary structure, homodimer. The cofactor is a divalent metal cation.

It localises to the cytoplasm. The enzyme catalyses coproporphyrinogen III + O2 + 2 H(+) = protoporphyrinogen IX + 2 CO2 + 2 H2O. Its pathway is porphyrin-containing compound metabolism; protoporphyrin-IX biosynthesis; protoporphyrinogen-IX from coproporphyrinogen-III (O2 route): step 1/1. Involved in the heme biosynthesis. Catalyzes the aerobic oxidative decarboxylation of propionate groups of rings A and B of coproporphyrinogen-III to yield the vinyl groups in protoporphyrinogen-IX. In Nitrosomonas europaea (strain ATCC 19718 / CIP 103999 / KCTC 2705 / NBRC 14298), this protein is Oxygen-dependent coproporphyrinogen-III oxidase.